Consider the following 308-residue polypeptide: D-alanine--D-alanine ligase (308 aa).

The ATP-grasp domain occupies 104-301 (KQIWQGSDLP…FDELCVAILD (198 aa)). 130-185 (IAELGLPVIIKPVHEGSSVGMSKVEKAEDFAAAIEKATQHDAVVMAEKWITGREFT) contacts ATP. Mg(2+)-binding residues include Asp-255, Glu-268, and Asn-270.

It belongs to the D-alanine--D-alanine ligase family. Mg(2+) is required as a cofactor. The cofactor is Mn(2+).

It is found in the cytoplasm. The catalysed reaction is 2 D-alanine + ATP = D-alanyl-D-alanine + ADP + phosphate + H(+). Its pathway is cell wall biogenesis; peptidoglycan biosynthesis. In terms of biological role, cell wall formation. In Acinetobacter baumannii (strain AB307-0294), this protein is D-alanine--D-alanine ligase.